The chain runs to 452 residues: Isocitrate dehydrogenase [NADP], mitochondrial (452 aa).

A mitochondrion-targeting transit peptide spans 1-39 (MAGYLRAVSSLCRASGSARTWAPAALTVPSWPEQPRRHY). N6-acetyllysine occurs at positions 45, 48, 67, and 69. 2 positions are modified to N6-acetyllysine; alternate: K80 and K106. An N6-succinyllysine; alternate mark is found at K80 and K106. Residues 115–117 (TIT) and R122 contribute to the NADP(+) site. T117 lines the D-threo-isocitrate pocket. Residues 134–140 (SPNGTIR) and R149 contribute to the D-threo-isocitrate site. Residue K155 is modified to N6-acetyllysine. K166 carries the N6-acetyllysine; alternate modification. K166 carries the post-translational modification N6-succinyllysine; alternate. R172 lines the D-threo-isocitrate pocket. N6-acetyllysine; alternate occurs at positions 180 and 193. 2 positions are modified to N6-succinyllysine; alternate: K180 and K193. An N6-acetyllysine modification is found at K199. K256 is modified (N6-acetyllysine; alternate). K256 is modified (N6-succinyllysine; alternate). Residues K263, K272, K275, and K280 each carry the N6-acetyllysine modification. N6-acetyllysine; alternate is present on K282. Position 282 is an N6-succinyllysine; alternate (K282). D291 is a binding site for Mn(2+). An NADP(+)-binding site is contributed by K299. Residue D314 coordinates Mn(2+). NADP(+) is bound by residues 349 to 354 (GTVTRH) and N367. At K384 the chain carries N6-acetyllysine; alternate. Position 384 is an N6-succinyllysine; alternate (K384). N6-acetyllysine is present on residues K400, K413, and K442.

The protein belongs to the isocitrate and isopropylmalate dehydrogenases family. In terms of assembly, homodimer. It depends on Mg(2+) as a cofactor. Mn(2+) is required as a cofactor. Post-translationally, acetylation at Lys-413 dramatically reduces catalytic activity. Deacetylated by SIRT3. In terms of tissue distribution, predominantly expressed in heart, liver and kidney. Expressed in activated B lymphocytes.

It is found in the mitochondrion. The enzyme catalyses D-threo-isocitrate + NADP(+) = 2-oxoglutarate + CO2 + NADPH. Its function is as follows. Plays a role in intermediary metabolism and energy production. It may tightly associate or interact with the pyruvate dehydrogenase complex. The protein is Isocitrate dehydrogenase [NADP], mitochondrial (Idh2) of Mus musculus (Mouse).